We begin with the raw amino-acid sequence, 278 residues long: Undecaprenyl-diphosphatase (278 aa).

6 helical membrane passes run 49–69, 97–117, 120–140, 197–217, 226–246, and 258–278; these read ANTFKIVIQLGSILAVIVVFW, HVLIGLLPAAVLGLLFEDFID, LFSIDTVIIGLAAGAILMIAA, ADFTFIMAVPIMFGASALSLV, GDLGFYVVGFIASFGFALLSI, and LVPFAIYRLVLAAVLAVIVYM.

Belongs to the UppP family.

The protein localises to the cell membrane. It carries out the reaction di-trans,octa-cis-undecaprenyl diphosphate + H2O = di-trans,octa-cis-undecaprenyl phosphate + phosphate + H(+). Catalyzes the dephosphorylation of undecaprenyl diphosphate (UPP). Confers resistance to bacitracin. The protein is Undecaprenyl-diphosphatase of Exiguobacterium sibiricum (strain DSM 17290 / CCUG 55495 / CIP 109462 / JCM 13490 / 255-15).